A 401-amino-acid chain; its full sequence is Glyceraldehyde-3-phosphate dehydrogenase A, chloroplastic (401 aa).

Residues 1 to 65 (MASNMLSIAN…RSSQNGVVEA (65 aa)) constitute a chloroplast transit peptide. Residues 76 to 77 (RI), aspartate 100, and arginine 145 each bind NADP(+). Residues 217-219 (SCT), threonine 248, arginine 263, 276-277 (TG), and arginine 299 contribute to the D-glyceraldehyde 3-phosphate site. Cysteine 218 serves as the catalytic Nucleophile. NADP(+) is bound at residue asparagine 381.

Belongs to the glyceraldehyde-3-phosphate dehydrogenase family. Tetramer of either four A chains (GAPDH 2) or two A and two B chains (GAPDH 1).

Its subcellular location is the plastid. The protein localises to the chloroplast. It carries out the reaction D-glyceraldehyde 3-phosphate + phosphate + NADP(+) = (2R)-3-phospho-glyceroyl phosphate + NADPH + H(+). The protein operates within carbohydrate biosynthesis; Calvin cycle. The chain is Glyceraldehyde-3-phosphate dehydrogenase A, chloroplastic (GAPA) from Spinacia oleracea (Spinach).